Here is a 103-residue protein sequence, read N- to C-terminus: Protein SUP-1 (103 aa).

The signal sequence occupies residues 1-16 (MMSYIALAACIGLAMA). The Extracellular segment spans residues 17 to 75 (ANVDHDVKSAVNEVTTTKDGDTYCPVPLVGTKCGTSSIFHYWKCCGELNKECCFNLQTW). A helical transmembrane segment spans residues 76–96 (VWVTLALFGVIFIASFVISLV). Topologically, residues 97–103 (RCICCRK) are cytoplasmic.

In terms of tissue distribution, expressed in a subset of neurons and in body wall muscles. In the nervous system, expressed specifically in cholinergic motor neurons of the ventral nerve cord, a subset of cholinergic head neurons, anterior sublateral neurons, and body sublateral neurons (at protein level).

The protein localises to the cell membrane. It is found in the perikaryon. The protein resides in the cell projection. Its subcellular location is the synapse. It localises to the cytoplasmic vesicle. The protein localises to the secretory vesicle. It is found in the synaptic vesicle. Its function is as follows. May be involved in trafficking or stabilization of the vesicular acetylcholine transporter unc-17. This Caenorhabditis elegans protein is Protein SUP-1.